The following is a 662-amino-acid chain: MINRITDNKFELVSKYKPSGDQPQAIEQLVDNIEGGEKAQILMGATGTGKTYTMSQVIAQVNKPTLVIAHNKTLAGQLYGEFKEFFPNNAVEYFVSYYDYYQPEAYVPSSDTYIEKDSSVNDEIDKLRHSATSALLERNDVIVVASVSCIYGLGSPKEYSDSVVSLRPGLEISRDKLLNDLVDIQFERNDIDFQRGKFRVRGDVVEIFPASRDEHAFRVEFFGDEIDRIREVEALTGRVLGEVDHLAIFPATHFVTNEDHMEVAIAKIQAELEEQLAIFEKEGKLLEAQRLKQRTEYDIEMLREMGYTNGVENYSRHMDGRSEGEPPYTLLDFFPDDFLIMIDESHMTMGQIRGMYNGDRSRKEMLVNYGFRLPSALDNRPLRREEFESHVHQIVYVSATPGDYENEQTDTVIEQIIRPTGLLDPEVEVRPTMGQIDDLLGEINARVEKNERTFITTLTKKMAEDLTDYFKEMGVKVKYMHSDIKTLERTEIIRDLRLGVFDVLVGINLLREGIDVPEVSLVAILDADKEGFLRNERGLIQTIGRAARNSEGHVIMYADTMTQSMQRAIDETARRRAIQMAYNEEHGIVPQTIKKEIRDLISVTKAALPDKEETVEIESLNKQERKDMIKKLEGQMQEAAGLLDFELAAQIRDMILEIKAMD.

The region spanning 31-188 (DNIEGGEKAQ…NDLVDIQFER (158 aa)) is the Helicase ATP-binding domain. Position 44–51 (44–51 (GATGTGKT)) interacts with ATP. The Beta-hairpin signature appears at 97-120 (YYDYYQPEAYVPSSDTYIEKDSSV). In terms of domain architecture, Helicase C-terminal spans 435–601 (QIDDLLGEIN…TIKKEIRDLI (167 aa)). Residues 626-661 (KDMIKKLEGQMQEAAGLLDFELAAQIRDMILEIKAM) enclose the UVR domain.

Belongs to the UvrB family. Forms a heterotetramer with UvrA during the search for lesions. Interacts with UvrC in an incision complex.

The protein resides in the cytoplasm. In terms of biological role, the UvrABC repair system catalyzes the recognition and processing of DNA lesions. A damage recognition complex composed of 2 UvrA and 2 UvrB subunits scans DNA for abnormalities. Upon binding of the UvrA(2)B(2) complex to a putative damaged site, the DNA wraps around one UvrB monomer. DNA wrap is dependent on ATP binding by UvrB and probably causes local melting of the DNA helix, facilitating insertion of UvrB beta-hairpin between the DNA strands. Then UvrB probes one DNA strand for the presence of a lesion. If a lesion is found the UvrA subunits dissociate and the UvrB-DNA preincision complex is formed. This complex is subsequently bound by UvrC and the second UvrB is released. If no lesion is found, the DNA wraps around the other UvrB subunit that will check the other stand for damage. The protein is UvrABC system protein B of Streptococcus sanguinis (strain SK36).